The chain runs to 442 residues: Protein PhoH2 (442 aa).

The PINc domain maps to 3–135 (KIYVLDTNVL…LVSKDVLVRV (133 aa)). 259–266 (GKAGTGKT) lines the ATP pocket.

It in the N-terminal section; belongs to the PINc/VapC protein family. The protein in the C-terminal section; belongs to the PhoH family.

It catalyses the reaction n ATP + n H2O + wound RNA = n ADP + n phosphate + unwound RNA.. The enzyme catalyses ATP + H2O = ADP + phosphate + H(+). The catalysed reaction is GTP + H2O = GDP + phosphate + H(+). Functionally, unwinds and/or cleaves 5'-tailed RNA in vitro. Has ATPase and GTPase activities. Unlike the protein in mycobacteria there does not seem to be an antitoxin gene upstream, suggesting this is not a toxin-antitoxin system. The chain is Protein PhoH2 from Bacillus subtilis (strain 168).